The following is a 281-amino-acid chain: HTH-type transcriptional activator RhaR (281 aa).

An HTH araC/xylS-type domain is found at 178-276 (DKLLAALAAS…GMSPGQWRQR (99 aa)). 2 DNA-binding regions (H-T-H motif) span residues 195 to 216 (ERFC…RQQT) and 243 to 266 (IGDI…SREI).

As to quaternary structure, binds DNA as a dimer.

Its subcellular location is the cytoplasm. Its function is as follows. Activates expression of the rhaSR operon in response to L-rhamnose. The polypeptide is HTH-type transcriptional activator RhaR (Klebsiella pneumoniae subsp. pneumoniae (strain ATCC 700721 / MGH 78578)).